The chain runs to 583 residues: Hyaluronan synthase-related protein (583 aa).

Residues 1-29 (MENTTDPENIPVSKPKYPTIRRILSQTFR) lie on the Cytoplasmic side of the membrane. Residues 30 to 50 (ILLLFSITTAYVLGYQALCHQ) traverse the membrane as a helical segment. Topologically, residues 51-52 (GL) are extracellular. Residues 53–73 (LITFGLYGAAMLLHLLMQGIF) form a helical membrane-spanning segment. At 74–393 (ANLEIRRIEK…CNAQWWHQHH (320 aa)) the chain is on the cytoplasmic side. The chain crosses the membrane as a helical span at residues 394–414 (IWMTYESATGIFFPFFVTAVL). At 415–425 (IRLMYSSSLCN) the chain is on the extracellular side. The helical transmembrane segment at 426-446 (IVWLFLCIQIMSLLLSLYASW) threads the bilayer. The Cytoplasmic portion of the chain corresponds to 447–457 (QSKKLSMVLMS). A helical membrane pass occupies residues 458–478 (LYSTLYIIWLLPCQLVALLTI). The Extracellular portion of the chain corresponds to 479-497 (AKSDWGTSGRKKVVNNYVP). Residues 498-518 (LFSLSIWAAVLLGGLCYSMYI) traverse the membrane as a helical segment. Topologically, residues 519-535 (GCRKDWSKPQANRELYH) are cytoplasmic. Residues 536 to 556 (LLYGCAGYMAYWVLMTVIYCV) traverse the membrane as a helical segment. Topologically, residues 557–583 (SGSCCKMRSQAVPQTHDITSLSVSLLV) are extracellular.

Belongs to the NodC/HAS family.

The protein resides in the membrane. This Xenopus laevis (African clawed frog) protein is Hyaluronan synthase-related protein (has-rs).